Consider the following 355-residue polypeptide: NADH-quinone oxidoreductase subunit H (355 aa).

Helical transmembrane passes span 25–45 (VVRI…LILW), 91–111 (WLYL…WAVI), 126–146 (LLYA…AGWA), 170–190 (MGFA…SEIV), 205–225 (FLSW…ISGI), 253–273 (MAFA…SALA), 290–310 (FIPG…VFIW), and 330–350 (VFLP…MSPL).

Belongs to the complex I subunit 1 family. NDH-1 is composed of 14 different subunits. Subunits NuoA, H, J, K, L, M, N constitute the membrane sector of the complex.

It localises to the cell inner membrane. The enzyme catalyses a quinone + NADH + 5 H(+)(in) = a quinol + NAD(+) + 4 H(+)(out). NDH-1 shuttles electrons from NADH, via FMN and iron-sulfur (Fe-S) centers, to quinones in the respiratory chain. The immediate electron acceptor for the enzyme in this species is believed to be ubiquinone. Couples the redox reaction to proton translocation (for every two electrons transferred, four hydrogen ions are translocated across the cytoplasmic membrane), and thus conserves the redox energy in a proton gradient. This subunit may bind ubiquinone. This Burkholderia cenocepacia (strain HI2424) protein is NADH-quinone oxidoreductase subunit H.